A 125-amino-acid chain; its full sequence is Small ribosomal subunit protein eS6 (125 aa).

The protein belongs to the eukaryotic ribosomal protein eS6 family.

This Pyrococcus abyssi (strain GE5 / Orsay) protein is Small ribosomal subunit protein eS6.